An 844-amino-acid polypeptide reads, in one-letter code: Prickle-like protein 2 (844 aa).

The PET domain maps to 18–126 (FDFQRNSTSD…NVRPFPVTMT (109 aa)). Serine 92 carries the post-translational modification Phosphoserine. 3 LIM zinc-binding domains span residues 128 to 193 (AICE…CLKP), 193 to 253 (PRCA…LYAE), and 253 to 317 (EYCD…EDPN). Disordered stretches follow at residues 314–350 (EDPNGSDSSDSAFQNARAKESRRSAKIGKNKGKTEEP) and 481–519 (ESYSDMSSQSFSETRGSIQVPKYEEEEEEEGGLSTQQCR). A compositionally biased stretch (polar residues) spans 318–327 (GSDSSDSAFQ). Phosphoserine is present on residues serine 319, serine 321, and serine 322. Positions 481–493 (ESYSDMSSQSFSE) are enriched in low complexity. A phosphothreonine mark is found at threonine 534, threonine 536, and threonine 539. Phosphoserine is present on residues serine 543, serine 546, serine 607, and serine 642. Residues 639–709 (MHQSFDFDGG…HLASEREAIS (71 aa)) form a disordered region. A compositionally biased stretch (basic residues) spans 682 to 692 (FRPHRSRRSRR). A compositionally biased stretch (basic and acidic residues) spans 693-709 (SRSDNALHLASEREAIS). The residue at position 731 (serine 731) is a Phosphoserine. Residues 822–844 (STLGGRGQLHSRKRQKSKNCIIS) are disordered. Cysteine methyl ester is present on cysteine 841. Cysteine 841 is lipidated: S-farnesyl cysteine. A propeptide spans 842–844 (IIS) (removed in mature form).

Belongs to the prickle / espinas / testin family. Expressed in brain, eye and testis. Additionally in fetal brain, adult cartilage, pancreatic islet, gastric cancer and uterus tumors.

It is found in the nucleus membrane. The chain is Prickle-like protein 2 (PRICKLE2) from Homo sapiens (Human).